The following is a 544-amino-acid chain: Membrane protein insertase YidC (544 aa).

5 consecutive transmembrane segments (helical) span residues Leu-13 to Leu-33, Trp-343 to Phe-363, Leu-409 to Val-429, Leu-461 to Leu-481, and Met-506 to Ile-526.

This sequence belongs to the OXA1/ALB3/YidC family. Type 1 subfamily. As to quaternary structure, interacts with the Sec translocase complex via SecD. Specifically interacts with transmembrane segments of nascent integral membrane proteins during membrane integration.

It localises to the cell inner membrane. Its function is as follows. Required for the insertion and/or proper folding and/or complex formation of integral membrane proteins into the membrane. Involved in integration of membrane proteins that insert both dependently and independently of the Sec translocase complex, as well as at least some lipoproteins. Aids folding of multispanning membrane proteins. This Borreliella burgdorferi (strain ZS7) (Borrelia burgdorferi) protein is Membrane protein insertase YidC.